A 353-amino-acid polypeptide reads, in one-letter code: Neutral protease 2 homolog AO090001000135 (353 aa).

An N-terminal signal peptide occupies residues 1–19 (MRFISVSSLLLALAPALNA). A propeptide spanning residues 20-176 (VPVEVAGSAQ…TQAVKILERR (157 aa)) is cleaved from the precursor. Intrachain disulfides connect Cys182/Cys254 and Cys261/Cys279. Position 304 (His304) interacts with Zn(2+). Glu305 is a catalytic residue. Zn(2+) contacts are provided by His308 and Asp319.

The protein belongs to the peptidase M35 family. The cofactor is Zn(2+).

It localises to the secreted. The enzyme catalyses Preferential cleavage of bonds with hydrophobic residues in P1'. Also 3-Asn-|-Gln-4 and 8-Gly-|-Ser-9 bonds in insulin B chain.. Functionally, secreted metalloproteinase that allows assimilation of proteinaceous substrates. Shows high activities on basic nuclear substrates such as histone and protamine. The chain is Neutral protease 2 homolog AO090001000135 from Aspergillus oryzae (strain ATCC 42149 / RIB 40) (Yellow koji mold).